Reading from the N-terminus, the 652-residue chain is Cleavage and polyadenylation specificity factor subunit 6 (652 aa).

Residues Q20–L85 are disordered. Residues Y93–K173 form the RRM domain. 2 disordered regions span residues K184–G440 and S518–H652. Residues P187–P203 are compositionally biased toward pro residues. Over residues M205–P223 the composition is skewed to gly residues. Pro residues-rich tracts occupy residues S256–H266, G295–R307, and P338–G352. The span at P391–Q406 shows a compositional bias: low complexity. Positions G420–D435 are enriched in pro residues. Residues S518–R528 show a composition bias toward basic and acidic residues. Positions E529–R538 are enriched in basic residues. A compositionally biased stretch (basic and acidic residues) spans E539–S590. At S596 the chain carries Phosphoserine. The span at E598–S610 shows a compositional bias: low complexity. A compositionally biased stretch (basic and acidic residues) spans R612 to H652.

Belongs to the RRM CPSF6/7 family.

It is found in the nucleus. May play a role in pre-mRNA 3'-processing. This Drosophila melanogaster (Fruit fly) protein is Cleavage and polyadenylation specificity factor subunit 6.